The following is a 493-amino-acid chain: Glycerol kinase 2 (493 aa).

Ser12 serves as a coordination point for ADP. ATP contacts are provided by Ser12 and Thr13. Ser12 contacts sn-glycerol 3-phosphate. An ADP-binding site is contributed by Lys16. Residues Arg82, Glu83, Tyr134, and Asp243 each contribute to the sn-glycerol 3-phosphate site. Residues Arg82, Glu83, Tyr134, Asp243, and Gln244 each contribute to the glycerol site. Residues Thr265 and Gly308 each contribute to the ADP site. 3 residues coordinate ATP: Thr265, Gly308, and Asn312. Asn413 lines the ADP pocket.

It belongs to the FGGY kinase family. As to quaternary structure, homotetramer and homodimer (in equilibrium).

It carries out the reaction glycerol + ATP = sn-glycerol 3-phosphate + ADP + H(+). It functions in the pathway polyol metabolism; glycerol degradation via glycerol kinase pathway; sn-glycerol 3-phosphate from glycerol: step 1/1. Activated by phosphorylation and inhibited by fructose 1,6-bisphosphate (FBP). Its function is as follows. Key enzyme in the regulation of glycerol uptake and metabolism. Catalyzes the phosphorylation of glycerol to yield sn-glycerol 3-phosphate. This chain is Glycerol kinase 2, found in Clostridium tetani (strain Massachusetts / E88).